Here is a 273-residue protein sequence, read N- to C-terminus: Glutamate racemase (273 aa).

Substrate-binding positions include 9–10 (DS) and 41–42 (YG). The Proton donor/acceptor role is filled by C73. 74-75 (NT) contacts substrate. The active-site Proton donor/acceptor is C183. 184–185 (TH) is a binding site for substrate.

It belongs to the aspartate/glutamate racemases family.

The catalysed reaction is L-glutamate = D-glutamate. Its pathway is cell wall biogenesis; peptidoglycan biosynthesis. Provides the (R)-glutamate required for cell wall biosynthesis. The protein is Glutamate racemase of Shewanella sp. (strain ANA-3).